A 322-amino-acid chain; its full sequence is Hydroxypyruvate reductase (322 aa).

Residues 160–161, aspartate 180, 211–212, 238–240, and aspartate 264 each bind NAD(+); these read RI, CP, and NSR. Arginine 240 is a catalytic residue. The active site involves glutamate 269. The active-site Proton donor is the histidine 288.

The protein belongs to the D-isomer specific 2-hydroxyacid dehydrogenase family.

The enzyme catalyses (R)-glycerate + NAD(+) = 3-hydroxypyruvate + NADH + H(+). It participates in carbohydrate metabolism. Involved in catabolism of D-apiose. Catalyzes the reduction of 3-hydroxypyruvate to glycerate. The protein is Hydroxypyruvate reductase of Blautia hydrogenotrophica (strain DSM 10507 / JCM 14656 / S5a33) (Ruminococcus hydrogenotrophicus).